Reading from the N-terminus, the 179-residue chain is Large ribosomal subunit protein uL6 (179 aa).

It belongs to the universal ribosomal protein uL6 family. Part of the 50S ribosomal subunit.

Its function is as follows. This protein binds to the 23S rRNA, and is important in its secondary structure. It is located near the subunit interface in the base of the L7/L12 stalk, and near the tRNA binding site of the peptidyltransferase center. This Clostridium perfringens (strain ATCC 13124 / DSM 756 / JCM 1290 / NCIMB 6125 / NCTC 8237 / Type A) protein is Large ribosomal subunit protein uL6.